The following is an 837-amino-acid chain: Katanin p80 WD40 repeat-containing subunit B1 homolog KTN80.4 (837 aa).

WD repeat units lie at residues 14–54 (AHSA…AILS), 57–96 (GHSSGIDSVTFDASEVLVAAGAASGTIKLWDLEEAKIVRT), 99–138 (GHRSNCISVDFHPFGEFFASGSLDTNLKIWDIRKKGCIHT), 141–182 (GHTR…TEFK), 184–222 (HEGQIQSLDFHPHEFLLATGSADRTVKFWDLETFELIGS), 225–265 (PETA…DGVD), and 267–304 (GWSRLSDMNVHEGKLLGCSYNQSCVGVWVVDLSRTEPC). The DWD box signature appears at 115-131 (FFASGSLDTNLKIWDIR). 3 disordered regions span residues 307-328 (GDTAQSNGHPEKRSCSGRDPVV), 358-462 (GRLS…ANPV), and 501-614 (LQAA…LVIN). Composition is skewed to polar residues over residues 376 to 387 (IGRSSTSQNSES) and 412 to 450 (TFSSTGSLPGTPHRVSSTNVSKATSGVSTAVSNAATSRR). The segment covering 509–520 (SPSSRNNPDLPD) has biased composition (low complexity). Composition is skewed to basic and acidic residues over residues 553–563 (ATERSINDFRY) and 580–595 (RNHDENYDLVSHRSNR).

It belongs to the WD repeat KATNB1 family. Component of KTN80-KTN1 complexes composed of a hexamer of KTN1-KTN80 heterodimers that sense microtubule (MT) geometry to confer precise MT severing. Interacts directly with AAA1/KTN1, and weakly with KTN80.1 and KTN80.3. In terms of tissue distribution, expressed in siliques, flowers, leaves, stems and roots.

It localises to the cytoplasm. It is found in the cytoskeleton. Functionally, may participate in a complex which severs microtubules in an ATP-dependent manner. This activity may promote rapid reorganization of cellular microtubule arrays. Confers precision to microtubule (MT) severing by specific targeting of KTN1 to MT cleavage sites such as crossover or branching nucleation sites. Together with other KTN80s, regulates cell elongation by modulating MT organization. The sequence is that of Katanin p80 WD40 repeat-containing subunit B1 homolog KTN80.4 from Arabidopsis thaliana (Mouse-ear cress).